The chain runs to 516 residues: Prolyl 4-hydroxylase subunit alpha-1 (516 aa).

Asn97 carries an N-linked (GlcNAc...) asparagine glycan. A TPR repeat occupies 189-222 (VYILDYLSYAVYQQGDLSKAMMLTKRLLELDPEH). Asn243 carries N-linked (GlcNAc...) asparagine glycosylation. Residues 393–501 (TAEELQVANY…KWVSNKWLHE (109 aa)) enclose the Fe2OG dioxygenase domain. Residues His411, Asp413, and His482 each contribute to the Fe cation site. Residue Lys492 participates in 2-oxoglutarate binding.

Belongs to the P4HA family. As to quaternary structure, heterotetramer of two alpha chains and two beta chains (the beta chain is the multi-functional PDI). Fe(2+) is required as a cofactor. The cofactor is L-ascorbate.

Its subcellular location is the endoplasmic reticulum lumen. The enzyme catalyses L-prolyl-[collagen] + 2-oxoglutarate + O2 = trans-4-hydroxy-L-prolyl-[collagen] + succinate + CO2. Catalyzes the post-translational formation of 4-hydroxyproline in -Xaa-Pro-Gly- sequences in collagens and other proteins. The sequence is that of Prolyl 4-hydroxylase subunit alpha-1 (P4HA1) from Gallus gallus (Chicken).